The primary structure comprises 878 residues: Alanine--tRNA ligase (878 aa).

Residues histidine 567, histidine 571, cysteine 669, and histidine 673 each coordinate Zn(2+).

This sequence belongs to the class-II aminoacyl-tRNA synthetase family. The cofactor is Zn(2+).

The protein localises to the cytoplasm. It catalyses the reaction tRNA(Ala) + L-alanine + ATP = L-alanyl-tRNA(Ala) + AMP + diphosphate. Its function is as follows. Catalyzes the attachment of alanine to tRNA(Ala) in a two-step reaction: alanine is first activated by ATP to form Ala-AMP and then transferred to the acceptor end of tRNA(Ala). Also edits incorrectly charged Ser-tRNA(Ala) and Gly-tRNA(Ala) via its editing domain. The chain is Alanine--tRNA ligase from Rickettsia canadensis (strain McKiel).